Consider the following 267-residue polypeptide: Hydroxynaphthalene reductase-like protein Arp2 (267 aa).

NADP(+) contacts are provided by I25, N45, D71, and N98. Active-site proton donor residues include S147 and S148. NADP(+) contacts are provided by Y162, K166, V195, and T197. The active-site Proton acceptor is the Y162. The Lowers pKa of active site Tyr role is filled by K166.

It belongs to the short-chain dehydrogenases/reductases (SDR) family.

Hydroxynaphthalene reductase-like protein; part of the Pks2 gene cluster that mediates the formation of infectious structures (appressoria), enabling these fungi to kill insects faster. The product of the Pks2 gene cluster is different from the one of Pks1 and has still not been identified. The chain is Hydroxynaphthalene reductase-like protein Arp2 from Metarhizium majus (strain ARSEF 297).